A 1145-amino-acid polypeptide reads, in one-letter code: Probable ATP-dependent RNA helicase DHX34 (1145 aa).

Residues 1–14 (MPPPRTREGRGHRD) show a composition bias toward basic and acidic residues. A disordered region spans residues 1-27 (MPPPRTREGRGHRDRDHHRAPREEEAP). The region spanning 174–334 (LQTLKEHQVV…FSHAPVVQVP (161 aa)) is the Helicase ATP-binding domain. ATP is bound at residue 187 to 194 (GDTGCGKS). Residues 281–284 (DEVH) carry the DEAH box motif. Positions 370 to 538 (AIDNKYPPEE…ALVLQMKSMS (169 aa)) constitute a Helicase C-terminal domain. Disordered stretches follow at residues 726–764 (LKRQ…QRAD) and 1091–1114 (NTCP…PQKT). 2 positions are modified to phosphoserine: serine 749 and serine 750.

The protein belongs to the DEAD box helicase family. DEAH subfamily. Forms a complex with RUVBL1 and RUVBL2. Part of a complex composed of SMG1, DHX34 and UPF1; within the complex DHX34 acts as a scaffolding protein to facilitate SMG1 phosphorylation of UPF1. Interacts with UPF1, MOV10, EIF4A3, XRN2, SMG6, SMG7, SMG9, UPF3A, UPF3B, CASC3/MLN51, XRN1, DIS3 and DCP1A; the interactions are RNA-independent. Interacts with NCBP1/CPB80; the interaction is RNA-dependent. Interacts (via C-terminus) with SMG1; the interaction is RNA-independent.

The catalysed reaction is ATP + H2O = ADP + phosphate + H(+). Functionally, probable ATP-binding RNA helicase. Required for nonsense-mediated decay (NMD) degradation of mRNA transcripts containing premature stop codons. Promotes the phosphorylation of UPF1 along with its interaction with key NMD pathway proteins UPF2 and EIF4A3. Negatively regulates the nucleotide binding ability and ATP hydrolysis of the RUVBL1-RUVBL2 complex via induction of N-terminus conformation changes of the RUVBL2 subunits. This is Probable ATP-dependent RNA helicase DHX34 from Mus musculus (Mouse).